We begin with the raw amino-acid sequence, 252 residues long: Protein Flattop homolog (252 aa).

The segment at 177–252 is disordered; it reads TEKRRRKRTI…EKERKAAKGH (76 aa). A compositionally biased stretch (basic and acidic residues) spans 218 to 252; it reads PKDKPKDKPKDKEAGKKDKTKDKGKEKERKAAKGH.

This sequence belongs to the Flattop family.

In Drosophila melanogaster (Fruit fly), this protein is Protein Flattop homolog.